The primary structure comprises 141 residues: MAKKVSKIVKLQVVAGKANPAPPVGPALGQAGVNIMGFCKEFNERTKDKAGLIIPVEITVFEDRSFTFITKTPPAAVLLKKAAKIEKASGEPNKNKVAKLPRAEAMKIAESKMEDLNAADIEAATRMIEGTARSMGIEIVD.

This sequence belongs to the universal ribosomal protein uL11 family. Part of the ribosomal stalk of the 50S ribosomal subunit. Interacts with L10 and the large rRNA to form the base of the stalk. L10 forms an elongated spine to which L12 dimers bind in a sequential fashion forming a multimeric L10(L12)X complex. One or more lysine residues are methylated.

Functionally, forms part of the ribosomal stalk which helps the ribosome interact with GTP-bound translation factors. This is Large ribosomal subunit protein uL11 from Selenomonas ruminantium.